Consider the following 281-residue polypeptide: Ethylene-inducing xylanase 1 (281 aa).

The signal sequence occupies residues 1-19 (MVSYKAFLITLAAVTRVLT). A glycan (N-linked (GlcNAc...) asparagine) is linked at Asn-23. The region spanning 32 to 220 (SGTPSSTGTS…SSGSSDITVG (189 aa)) is the GH11 domain. The Nucleophile role is filled by Glu-116. The active-site Proton donor is the Glu-207. Residues 246 to 281 (TCGALYSQCGGTGFTGSQCCASGTCKYANSYYSQCL) enclose the CBM1 domain.

Belongs to the glycosyl hydrolase 11 (cellulase G) family.

The catalysed reaction is Endohydrolysis of (1-&gt;4)-beta-D-xylosidic linkages in xylans.. Its pathway is glycan degradation; xylan degradation. Functionally, endo-1,4-beta-xylanase involved in the hydrolysis of xylan, a major structural heterogeneous polysaccharide found in plant biomass representing the second most abundant polysaccharide in the biosphere, after cellulose. May act as an elicitor of plant defense responses in certain plants but does not exhibit any cell death when transiently expressed in N.benthamiana. The sequence is that of Ethylene-inducing xylanase 1 from Botryotinia fuckeliana (strain B05.10) (Noble rot fungus).